Consider the following 236-residue polypeptide: MNIKKVDKYSFLEFKDDKFSLYFSTAENGLNFNINTEEGNDNIRNLKDWFNVKDVGYLKQTHSDIILNYDSDKELLEGDALITDKDNTLVGVFTADCVPVLLYDKSKNVMAAVHSGWKGTSDMIVKKTIIKMKQEFLSTASDITVYIGPHNKACCYEFGEEALSEFEGSGIYDISEIYKDGKLDLEKCIVKQCKSENVNNIKCLNICTNCSKEYKMFSYRRDGKSAGRMFSFIIKK.

Positions 62, 97, and 114 each coordinate Zn(2+).

The protein belongs to the purine nucleoside phosphorylase YfiH/LACC1 family. As to quaternary structure, homodimer. The cofactor is Cu(2+). It depends on Zn(2+) as a cofactor.

The catalysed reaction is adenosine + phosphate = alpha-D-ribose 1-phosphate + adenine. It carries out the reaction S-methyl-5'-thioadenosine + phosphate = 5-(methylsulfanyl)-alpha-D-ribose 1-phosphate + adenine. The enzyme catalyses inosine + phosphate = alpha-D-ribose 1-phosphate + hypoxanthine. It catalyses the reaction adenosine + H2O + H(+) = inosine + NH4(+). Purine nucleoside enzyme that catalyzes the phosphorolysis of adenosine and inosine nucleosides, yielding D-ribose 1-phosphate and the respective free bases, adenine and hypoxanthine. Also catalyzes the phosphorolysis of S-methyl-5'-thioadenosine into adenine and S-methyl-5-thio-alpha-D-ribose 1-phosphate. Also has adenosine deaminase activity. This Clostridium acetobutylicum (strain ATCC 824 / DSM 792 / JCM 1419 / IAM 19013 / LMG 5710 / NBRC 13948 / NRRL B-527 / VKM B-1787 / 2291 / W) protein is Purine nucleoside phosphorylase CA_C1699.